Reading from the N-terminus, the 227-residue chain is MASHRTDRTKNPTSNGDVSKVDLLLHPELLSQEFIQLMLQERNIAVSDPEDRDRLTGLYLQHVIPLPQRELPRSRWGKRMEKSRPRLSSSSTHSSSTDSGRKRPLIVFDGSSTSTGCVKLKKPDSSSAPVTTDRLKPPVSSVSLTNPIRKLSGASTNCSSSNFSNRTPVSSSGAIPKSPSNHSNSSVHSNNATSKLKRTSPSKGEPDTAKDIKSPETKKKIQHITWP.

Basic and acidic residues predominate over residues 71 to 84 (LPRSRWGKRMEKSR). Residues 71–227 (LPRSRWGKRM…KKKIQHITWP (157 aa)) form a disordered region. A compositionally biased stretch (low complexity) spans 88-98 (SSSSTHSSSTD). Polar residues predominate over residues 153–173 (GASTNCSSSNFSNRTPVSSSG). The span at 178–191 (SPSNHSNSSVHSNN) shows a compositional bias: low complexity. The span at 204–219 (GEPDTAKDIKSPETKK) shows a compositional bias: basic and acidic residues.

Belongs to the ashwin family.

It is found in the nucleus. The protein is Ashwin of Danio rerio (Zebrafish).